Reading from the N-terminus, the 1148-residue chain is Protein pianissimo A (1148 aa).

Positions 1–34 are enriched in low complexity; the sequence is MTSSDSSVNTTSSSFGNISISSPNHSSSTPPLNN. Residues 1–41 are disordered; the sequence is MTSSDSSVNTTSSSFGNISISSPNHSSSTPPLNNGNGNNVS. An N-terminal Ras-GEF domain is found at 803 to 914; sequence KVSALSLNVL…STSGVYLPPH (112 aa).

This sequence belongs to the RICTOR family. In terms of assembly, part of a complex, TORC2, consisting of tor, lst8, piaA and ripA. Additional proteins, such as 14-3-3 and heat-shock proteins, may also belong to the TORC2 complex.

It localises to the cytoplasm. In terms of biological role, regulates cell growth, chemotaxis, signal relay and the actin cytoskeleton. Required for chemoattractant receptor and G protein-mediated activation of the 12 transmembrane domain adenylyl cyclase. Functions as a part of protein complex TORC2. TORC2, is presumed to be indirectly negatively modulated by rapamycin and regulates actin polarization. TORC2, but not TORC1, negatively regulates phagocytosis. This protein and dagA protein CRAC, a cytosolic regulator, are both essential for activation of the enzyme adenylyl cyclase. This protein and CRAC do not function redundantly. Both proteins are integral components of the adenylyl cyclase activation pathway. This Dictyostelium discoideum (Social amoeba) protein is Protein pianissimo A (piaA).